The following is a 663-amino-acid chain: Epithelial sodium channel subunit gamma-2 (663 aa).

Residues 1–55 (MSNSGKKLTQKLKKNLPVTGPQAPTLYELMQWYCLNTNTHGCRRIVVSKGRLRRW) are Cytoplasmic-facing. Residues 56-76 (IWIVLTLIAVALIFWQCALLL) form a helical membrane-spanning segment. Topologically, residues 77 to 544 (MTYYSVSASI…GGQLGLWMSC (468 aa)) are extracellular. 8 disulfides stabilise this stretch: C101/C286, C209/C217, C263/C270, C375/C460, C397/C456, C401/C452, C410/C437, and C412/C426. The helical transmembrane segment at 545–565 (SMVCGLEIVEVFFIDSFWVIL) threads the bilayer. Residues 566–663 (RQKWHKLCNW…IDSDEDVERF (98 aa)) lie on the Cytoplasmic side of the membrane.

This sequence belongs to the amiloride-sensitive sodium channel (TC 1.A.6) family. SCNN1G subfamily. In terms of assembly, component of the heterotrimeric epithelial sodium channel (ENaC) composed of an alpha/SCNN1A, a beta/SCNN1B and a gamma/SCNN1G subunit.

It is found in the apical cell membrane. The catalysed reaction is Na(+)(in) = Na(+)(out). Its activity is regulated as follows. Originally identified and characterized by its inhibition by the diuretic drug amiloride. Its function is as follows. This is one of the three pore-forming subunits of the heterotrimeric epithelial sodium channel (ENaC), a critical regulator of sodium balance and fluid homeostasis. ENaC operates in epithelial tissues, where it mediates the electrodiffusion of sodium ions from extracellular fluid through the apical membrane of cells, with water following osmotically. This chain is Epithelial sodium channel subunit gamma-2 (scnn1g-b), found in Xenopus laevis (African clawed frog).